The primary structure comprises 271 residues: 4-hydroxy-tetrahydrodipicolinate reductase (271 aa).

NAD(+) contacts are provided by residues 10–15 (GAGGRM), Glu36, 100–102 (GTT), and 124–127 (SGNM). Catalysis depends on His157, which acts as the Proton donor/acceptor. A (S)-2,3,4,5-tetrahydrodipicolinate-binding site is contributed by His158. Catalysis depends on Lys161, which acts as the Proton donor. 167–168 (GT) is a binding site for (S)-2,3,4,5-tetrahydrodipicolinate.

It belongs to the DapB family.

Its subcellular location is the cytoplasm. The catalysed reaction is (S)-2,3,4,5-tetrahydrodipicolinate + NAD(+) + H2O = (2S,4S)-4-hydroxy-2,3,4,5-tetrahydrodipicolinate + NADH + H(+). It catalyses the reaction (S)-2,3,4,5-tetrahydrodipicolinate + NADP(+) + H2O = (2S,4S)-4-hydroxy-2,3,4,5-tetrahydrodipicolinate + NADPH + H(+). It functions in the pathway amino-acid biosynthesis; L-lysine biosynthesis via DAP pathway; (S)-tetrahydrodipicolinate from L-aspartate: step 4/4. Its function is as follows. Catalyzes the conversion of 4-hydroxy-tetrahydrodipicolinate (HTPA) to tetrahydrodipicolinate. In Rhodopseudomonas palustris (strain HaA2), this protein is 4-hydroxy-tetrahydrodipicolinate reductase.